Reading from the N-terminus, the 376-residue chain is Homeobox protein extradenticle (376 aa).

Positions 16-35 are disordered; that stretch reads APQGYSLSGQDDGQNTGNEN. Over residues 20 to 34 the composition is skewed to polar residues; it reads YSLSGQDDGQNTGNE. The PBC domain occupies 38 to 237; sequence RKQKDIGEIL…VMILRSRFLD (200 aa). The interval 45–124 is PBC-A; it reads EILQQIMSIS…EGVAGPEKGG (80 aa). The tract at residues 127 to 237 is PBC-B; it reads AAAASAAAAS…VMILRSRFLD (111 aa). A DNA-binding region (homeobox; TALE-type) is located at residues 238–300; it reads ARRKRRNFSK…NKRIRYKKNI (63 aa). The segment covering 318 to 335 has biased composition (low complexity); sequence ASPYSMAGPPSGTTTPMM. The interval 318-376 is disordered; that stretch reads ASPYSMAGPPSGTTTPMMSPAPPQDSMGYTMGSGGYDQQQPYDNSMGGYDPNLHQDLSP.

It belongs to the TALE/PBX homeobox family. Interacts with Ubx and hth.

It is found in the nucleus. In terms of biological role, transcription factor which acts with the selector homeodomain proteins altering the regulation of downstream target genes such as wingless (wg), teashirt (tsh) and decapentaplegic (dpp), thus affecting segmental identity. Delimits the eye field and prevent inappropriate eye development. Required for proper localization of chordotonal organs within the peripheral nervous system. This is Homeobox protein extradenticle from Drosophila pseudoobscura pseudoobscura (Fruit fly).